A 508-amino-acid chain; its full sequence is Histidine ammonia-lyase (508 aa).

Positions 141 to 143 form a cross-link, 5-imidazolinone (Ala-Gly); that stretch reads ASG. Residue serine 142 is modified to 2,3-didehydroalanine (Ser).

Belongs to the PAL/histidase family. Contains an active site 4-methylidene-imidazol-5-one (MIO), which is formed autocatalytically by cyclization and dehydration of residues Ala-Ser-Gly.

The protein resides in the cytoplasm. It carries out the reaction L-histidine = trans-urocanate + NH4(+). It functions in the pathway amino-acid degradation; L-histidine degradation into L-glutamate; N-formimidoyl-L-glutamate from L-histidine: step 1/3. The protein is Histidine ammonia-lyase of Geobacillus sp. (strain WCH70).